Consider the following 145-residue polypeptide: UPF0735 ACT domain-containing protein CPR_1404 (145 aa).

Residues 69–144 (IFNMVVTHEK…GVEKVEFVAM (76 aa)) form the ACT domain.

Belongs to the UPF0735 family.

The protein is UPF0735 ACT domain-containing protein CPR_1404 of Clostridium perfringens (strain SM101 / Type A).